The sequence spans 394 residues: MVNTMKTKLLCVLLLCGAVFSLPRQETYRQLARGSRAYGDPHATCYKDQGVTYRGTWSTSESGAQCINWNSNLLIRRTYNGRMPEAVKLGLGNHNYCRNPDGASKPWCYVIKARKFTSESCSVPVCSKATCGLRKYKEPQLHSTGGLFTDITSHPWQAAIFAQNRRSSGERFLCGGILISSCWVLTAAHCFQERYPPQHLRVVLGRTYRVKPGKEEQTFEVEKCIVHEEFDDDTYNNDIALLQLKSGSPQCAQESDSVRAICLPEANLQLPDWTECELSGYGKHKSSSPFYSEQLKEGHVRLYPSSRCTSKFLFNKTVTNNMLCAGDTRSGEIYPNVHDACQGDSGGPLVCMNDNHMTLLGIISWGVGCGEKDIPGVYTKVTNYLGWIRDNMRP.

The first 36 residues, 1-36 (MVNTMKTKLLCVLLLCGAVFSLPRQETYRQLARGSR), serve as a signal peptide directing secretion. The Kringle domain occupies 45-126 (CYKDQGVTYR…TSESCSVPVC (82 aa)). Cystine bridges form between cysteine 45–cysteine 126, cysteine 66–cysteine 108, cysteine 97–cysteine 121, cysteine 131–cysteine 262, cysteine 174–cysteine 190, cysteine 182–cysteine 251, cysteine 276–cysteine 351, cysteine 308–cysteine 324, and cysteine 341–cysteine 369. One can recognise a Peptidase S1 domain in the interval 143–393 (STGGLFTDIT…YLGWIRDNMR (251 aa)). Catalysis depends on charge relay system residues histidine 189 and aspartate 238. N-linked (GlcNAc...) asparagine glycosylation is present at asparagine 315. The active-site Charge relay system is the serine 345.

The protein belongs to the peptidase S1 family. In terms of assembly, monomer.

It is found in the secreted. The enzyme catalyses Specific cleavage of Arg-|-Val bond in plasminogen to form plasmin.. Probably essential to support the feeding habits of this exclusively haematophagous animal. Probable potent thrombolytic agent. In Desmodus rotundus (Vampire bat), this protein is Salivary plasminogen activator gamma.